Here is a 393-residue protein sequence, read N- to C-terminus: Formate-dependent phosphoribosylglycinamide formyltransferase (393 aa).

N(1)-(5-phospho-beta-D-ribosyl)glycinamide contacts are provided by residues 22–23 (EL) and Glu82. ATP contacts are provided by residues Arg114, Lys155, 160 to 165 (SSGHGQ), 195 to 198 (EGFI), and Glu203. The region spanning 119–308 (RLAAEELGLK…QFALHARAIL (190 aa)) is the ATP-grasp domain. Residues Glu267 and Glu279 each coordinate Mg(2+). N(1)-(5-phospho-beta-D-ribosyl)glycinamide contacts are provided by residues Asp286, Lys356, and 363–364 (RR).

This sequence belongs to the PurK/PurT family. In terms of assembly, homodimer.

The catalysed reaction is N(1)-(5-phospho-beta-D-ribosyl)glycinamide + formate + ATP = N(2)-formyl-N(1)-(5-phospho-beta-D-ribosyl)glycinamide + ADP + phosphate + H(+). Its pathway is purine metabolism; IMP biosynthesis via de novo pathway; N(2)-formyl-N(1)-(5-phospho-D-ribosyl)glycinamide from N(1)-(5-phospho-D-ribosyl)glycinamide (formate route): step 1/1. Its function is as follows. Involved in the de novo purine biosynthesis. Catalyzes the transfer of formate to 5-phospho-ribosyl-glycinamide (GAR), producing 5-phospho-ribosyl-N-formylglycinamide (FGAR). Formate is provided by PurU via hydrolysis of 10-formyl-tetrahydrofolate. The polypeptide is Formate-dependent phosphoribosylglycinamide formyltransferase (Actinobacillus pleuropneumoniae serotype 5b (strain L20)).